A 41-amino-acid chain; its full sequence is MKVLSSLKSAKARHRDCKVVRRRGKIFVICKSNPRFKARQR.

Belongs to the bacterial ribosomal protein bL36 family.

The sequence is that of Large ribosomal subunit protein bL36 from Stenotrophomonas maltophilia (strain R551-3).